We begin with the raw amino-acid sequence, 390 residues long: tRNA-specific 2-thiouridylase MnmA (390 aa).

Residues 20 to 27 (AMSGGVDS) and leucine 46 each bind ATP. Catalysis depends on cysteine 114, which acts as the Nucleophile. Cysteine 114 and cysteine 211 are oxidised to a cystine. An ATP-binding site is contributed by glycine 138. Residues 161 to 163 (RDQ) form an interaction with tRNA region. Cysteine 211 acts as the Cysteine persulfide intermediate in catalysis.

The protein belongs to the MnmA/TRMU family.

The protein localises to the cytoplasm. The enzyme catalyses S-sulfanyl-L-cysteinyl-[protein] + uridine(34) in tRNA + AH2 + ATP = 2-thiouridine(34) in tRNA + L-cysteinyl-[protein] + A + AMP + diphosphate + H(+). Functionally, catalyzes the 2-thiolation of uridine at the wobble position (U34) of tRNA, leading to the formation of s(2)U34. The polypeptide is tRNA-specific 2-thiouridylase MnmA (Azorhizobium caulinodans (strain ATCC 43989 / DSM 5975 / JCM 20966 / LMG 6465 / NBRC 14845 / NCIMB 13405 / ORS 571)).